Consider the following 93-residue polypeptide: Large ribosomal subunit protein uL23cz/uL23cy (93 aa).

This sequence belongs to the universal ribosomal protein uL23 family. Part of the 50S ribosomal subunit.

The protein resides in the plastid. Its subcellular location is the chloroplast. Its function is as follows. Binds to 23S rRNA. In Jasminum nudiflorum (Winter jasmine), this protein is Large ribosomal subunit protein uL23cz/uL23cy (rpl23-A).